We begin with the raw amino-acid sequence, 669 residues long: Elongation factor G 2 (669 aa).

In terms of domain architecture, tr-type G spans 1–276 (MGIRNIGIMA…SIVDYLPSPF (276 aa)). GTP is bound by residues 10–17 (AHIDAGKT), 74–78 (DTPGH), and 128–131 (NKMD).

The protein belongs to the TRAFAC class translation factor GTPase superfamily. Classic translation factor GTPase family. EF-G/EF-2 subfamily.

Its subcellular location is the cytoplasm. Its function is as follows. Catalyzes the GTP-dependent ribosomal translocation step during translation elongation. During this step, the ribosome changes from the pre-translocational (PRE) to the post-translocational (POST) state as the newly formed A-site-bound peptidyl-tRNA and P-site-bound deacylated tRNA move to the P and E sites, respectively. Catalyzes the coordinated movement of the two tRNA molecules, the mRNA and conformational changes in the ribosome. The chain is Elongation factor G 2 (fusA2) from Borreliella afzelii (strain PKo) (Borrelia afzelii).